Consider the following 138-residue polypeptide: Large ribosomal subunit protein uL16 (138 aa).

A compositionally biased stretch (basic residues) spans Met1–Gln13. Residues Met1 to Thr22 are disordered.

The protein belongs to the universal ribosomal protein uL16 family. As to quaternary structure, part of the 50S ribosomal subunit.

In terms of biological role, binds 23S rRNA and is also seen to make contacts with the A and possibly P site tRNAs. In Paraburkholderia phymatum (strain DSM 17167 / CIP 108236 / LMG 21445 / STM815) (Burkholderia phymatum), this protein is Large ribosomal subunit protein uL16.